The primary structure comprises 881 residues: Translation initiation factor IF-2 (881 aa).

Disordered stretches follow at residues 31–147 and 165–291; these read KLAQ…TKVP and SVVG…HYDE. The segment covering 42–55 has biased composition (basic and acidic residues); it reads NSSEKPSAKVAEKV. The span at 68–77 shows a compositional bias: polar residues; that stretch reads ATPESVSSET. A compositionally biased stretch (acidic residues) spans 114–128; the sequence is VEEEIASSTDSEPEV. The span at 191–203 shows a compositional bias: basic and acidic residues; that stretch reads PKKEDKPAPKERS. Positions 204 to 233 are enriched in polar residues; the sequence is GQAQAKPQQSSEASSENKPHSPNNNRSSQP. The span at 235–267 shows a compositional bias: basic and acidic residues; it reads YRRDTSKKPGSDFRDRAKKDDNPKAFTGRDRYG. Basic residues predominate over residues 278–287; it reads RKKRVQKTKK. Residues 387–556 form the tr-type G domain; that stretch reads IRPPIVAFMG…ALQAEVLELK (170 aa). The segment at 396-403 is G1; sequence GHVDHGKT. 396-403 provides a ligand contact to GTP; it reads GHVDHGKT. The segment at 421–425 is G2; sequence AITQH. The tract at residues 442-445 is G3; that stretch reads DTPG. Residues 442–446 and 496–499 contribute to the GTP site; these read DTPGH and NKCD. Residues 496–499 are G4; sequence NKCD. Residues 532–534 are G5; that stretch reads SAK.

It belongs to the TRAFAC class translation factor GTPase superfamily. Classic translation factor GTPase family. IF-2 subfamily.

Its subcellular location is the cytoplasm. Functionally, one of the essential components for the initiation of protein synthesis. Protects formylmethionyl-tRNA from spontaneous hydrolysis and promotes its binding to the 30S ribosomal subunits. Also involved in the hydrolysis of GTP during the formation of the 70S ribosomal complex. The sequence is that of Translation initiation factor IF-2 from Chlamydia felis (strain Fe/C-56) (Chlamydophila felis).